Reading from the N-terminus, the 950-residue chain is Synaptotagmin-like protein 2 (950 aa).

Residues 1–57 (MIDLSFLTEEEQDAILKVLQRDAALKRAEEERVRHLPEKIKDDQQLKNMSGQWFYEA) enclose the RabBD domain. Disordered stretches follow at residues 78-98 (RKKLPAAAEQNKDTAMRAKES), 116-289 (VEEP…ETLR), and 361-620 (ESDQ…SSSG). Residues 87–97 (QNKDTAMRAKE) are compositionally biased toward basic and acidic residues. Polar residues-rich tracts occupy residues 140-150 (IDMSQESTRTP) and 173-183 (LQQTKPEQSKT). Residues 193–205 (KEGELSESKEKSS) show a composition bias toward basic and acidic residues. A compositionally biased stretch (polar residues) spans 219-230 (QTVSTEPENASH). Over residues 246 to 264 (NDLEKDDNQSFPRQRRDSL) the composition is skewed to basic and acidic residues. Positions 434–445 (VESSSVINGQQE) are enriched in polar residues. 2 stretches are compositionally biased toward basic and acidic residues: residues 479-502 (HSFRDHRQGSEEEHSPVLKTLERR) and 531-544 (ELVRSAEDDQKADQ). Residues 557 to 567 (TVPSLPDNQFS) show a composition bias toward polar residues. A compositionally biased stretch (low complexity) spans 608–620 (SPSSLTNLSSSSG). C2 domains lie at 644 to 769 (VKGS…LKWY) and 784 to 913 (NRGE…VDWM).

In terms of assembly, monomer. Binds NRXN1. Binds RAB27A that has been activated by GTP-binding. Interacts with RAB27B. Isoform 1 is highly susceptible to proteolytic degradation and is stabilized by the interaction with RAB27A. Highly expressed in brain, lung, kidney, testis and in embryos after day 7. Detected at lower levels in skeletal muscle. Expressed in pancreatic alpha cells. Isoform 6 is highly expressed in brain, but not detectable in the other tissues tested. Isoform 1 is expressed abundantly in the stomach and is predominantly localized at the apical region of gastric-surface mucus cells. Isoform 11 is expressed in cytotoxic T-lymphocytes (CTL).

It localises to the melanosome membrane. It is found in the cell membrane. In terms of biological role, isoform 11 acts as a RAB27A effector protein and plays a role in cytotoxic granule exocytosis in lymphocytes. Required for cytotoxic granule docking at the immunologic synapse. Isoform 1 may play a role in melanosome transport and vesicle trafficking. It controls melanosome distribution in the cell periphery and regulates melanocyte morphology. Isoform 1 acts as a positive mediator of mucus secretion by the surface mucus cells of the stomach. Mediates basal mucus secretion by gastric surface cells by promoting the proper granule biognesis and docking of mucus granules with the apical plasma membrane. The sequence is that of Synaptotagmin-like protein 2 (Sytl2) from Mus musculus (Mouse).